We begin with the raw amino-acid sequence, 74 residues long: ATP synthase subunit 9, mitochondrial (74 aa).

The next 2 helical transmembrane spans lie at 8–28 (MGAG…GNVF) and 50–70 (ILGF…AFLI).

This sequence belongs to the ATPase C chain family. In terms of assembly, F-type ATPases have 2 components, CF(1) - the catalytic core - and CF(0) - the membrane proton channel. CF(1) has five subunits: alpha(3), beta(3), gamma(1), delta(1), epsilon(1). CF(0) has three main subunits: a, b and c.

It localises to the mitochondrion membrane. Functionally, this protein is one of the chains of the nonenzymatic membrane component (F0) of mitochondrial ATPase. The sequence is that of ATP synthase subunit 9, mitochondrial (ATP9) from Solanum lycopersicum (Tomato).